We begin with the raw amino-acid sequence, 370 residues long: Chloromuconate cycloisomerase (370 aa).

K165 acts as the Proton acceptor in catalysis. Residues D194, E220, and D245 each contribute to the Mn(2+) site. E323 functions as the Proton donor in the catalytic mechanism.

Belongs to the mandelate racemase/muconate lactonizing enzyme family. Mn(2+) is required as a cofactor.

The enzyme catalyses 2-[(2R)-2-chloro-2,5-dihydro-5-oxofuryl]acetate = 3-chloro-cis,cis-muconate + H(+). Its pathway is aromatic compound metabolism; 3-chlorocatechol degradation. Its function is as follows. Highly active toward chlorinated substrates but retains diminished activity toward the non-chlorinated substrates. This chain is Chloromuconate cycloisomerase (clcB), found in Pseudomonas putida (Arthrobacter siderocapsulatus).